The primary structure comprises 527 residues: Amine oxidase [flavin-containing] A (527 aa).

Position 1 is an N-acetylmethionine (Met1). Topologically, residues 1–497 are cytoplasmic; sequence MASREKTSIE…HTFWERNLPS (497 aa). Phosphoserine is present on Ser383. At Cys406 the chain carries S-8alpha-FAD cysteine. The chain crosses the membrane as a helical; Anchor for type IV membrane protein span at residues 498 to 518; it reads VTGLLKLIGFTTSVTALWIVA. Topologically, residues 519–527 are mitochondrial intermembrane; it reads YKFRLLRRS. The tract at residues 520–522 is interaction with membrane phospholipid headgroups; the sequence is KFR.

The protein belongs to the flavin monoamine oxidase family. In terms of assembly, monomer, homo- or heterodimer (containing two subunits of similar size). Each subunit contains a covalently bound flavin. Enzymatically active as monomer. Requires FAD as cofactor.

The protein localises to the mitochondrion outer membrane. The catalysed reaction is a secondary aliphatic amine + O2 + H2O = a primary amine + an aldehyde + H2O2. The enzyme catalyses a primary methyl amine + O2 + H2O = an aldehyde + H2O2 + NH4(+). It catalyses the reaction (R)-adrenaline + O2 + H2O = (R)-3,4-dihydroxymandelaldehyde + methylamine + H2O2. It carries out the reaction dopamine + O2 + H2O = 3,4-dihydroxyphenylacetaldehyde + H2O2 + NH4(+). The catalysed reaction is tyramine + O2 + H2O = (4-hydroxyphenyl)acetaldehyde + H2O2 + NH4(+). The enzyme catalyses (R)-noradrenaline + O2 + H2O = (R)-3,4-dihydroxymandelaldehyde + H2O2 + NH4(+). It catalyses the reaction serotonin + O2 + H2O = (5-hydroxyindol-3-yl)acetaldehyde + H2O2 + NH4(+). It carries out the reaction kynuramine + O2 + H2O = 3-(2-aminophenyl)-3-oxopropanal + H2O2 + NH4(+). The catalysed reaction is tryptamine + O2 + H2O = indole-3-acetaldehyde + H2O2 + NH4(+). The enzyme catalyses 2-phenylethylamine + O2 + H2O = 2-phenylacetaldehyde + H2O2 + NH4(+). Its function is as follows. Catalyzes the oxidative deamination of primary and some secondary amine such as neurotransmitters, with concomitant reduction of oxygen to hydrogen peroxide and has important functions in the metabolism of neuroactive and vasoactive amines in the central nervous system and peripheral tissues. Preferentially oxidizes serotonin. Also catalyzes the oxidative deamination of kynuramine to 3-(2-aminophenyl)-3-oxopropanal that can spontaneously condense to 4-hydroxyquinoline. This chain is Amine oxidase [flavin-containing] A, found in Canis lupus familiaris (Dog).